The sequence spans 75 residues: UPF0154 protein MYPU_1460 (75 aa).

Residues 8-28 form a helical membrane-spanning segment; sequence GLIVGLSILFFIIGGVVAFFV.

This sequence belongs to the UPF0154 family.

It is found in the membrane. The chain is UPF0154 protein MYPU_1460 from Mycoplasmopsis pulmonis (strain UAB CTIP) (Mycoplasma pulmonis).